The primary structure comprises 388 residues: Succinate--CoA ligase [ADP-forming] subunit beta (388 aa).

The region spanning 9 to 244 (KQLFARYGMP…PSQEDAREAH (236 aa)) is the ATP-grasp domain. ATP is bound by residues K46, 53 to 55 (GRG), E99, T102, and E107. 2 residues coordinate Mg(2+): N199 and D213. Substrate contacts are provided by residues N264 and 321–323 (GIV).

It belongs to the succinate/malate CoA ligase beta subunit family. In terms of assembly, heterotetramer of two alpha and two beta subunits. The cofactor is Mg(2+).

The enzyme catalyses succinate + ATP + CoA = succinyl-CoA + ADP + phosphate. It catalyses the reaction GTP + succinate + CoA = succinyl-CoA + GDP + phosphate. The protein operates within carbohydrate metabolism; tricarboxylic acid cycle; succinate from succinyl-CoA (ligase route): step 1/1. Succinyl-CoA synthetase functions in the citric acid cycle (TCA), coupling the hydrolysis of succinyl-CoA to the synthesis of either ATP or GTP and thus represents the only step of substrate-level phosphorylation in the TCA. The beta subunit provides nucleotide specificity of the enzyme and binds the substrate succinate, while the binding sites for coenzyme A and phosphate are found in the alpha subunit. This is Succinate--CoA ligase [ADP-forming] subunit beta from Yersinia pseudotuberculosis serotype O:1b (strain IP 31758).